The sequence spans 310 residues: HPr kinase/phosphorylase (310 aa).

Catalysis depends on residues His-138 and Lys-159. Residue 153–160 (GDSGIGKS) participates in ATP binding. Ser-160 is a Mg(2+) binding site. Asp-177 serves as the catalytic Proton acceptor; for phosphorylation activity. Proton donor; for dephosphorylation activity. The important for the catalytic mechanism of both phosphorylation and dephosphorylation stretch occupies residues 201–210 (LEIRGVGIID). Glu-202 lines the Mg(2+) pocket. Arg-243 is an active-site residue. The interval 264 to 269 (PVKTGR) is important for the catalytic mechanism of dephosphorylation.

This sequence belongs to the HPrK/P family. Homohexamer. Mg(2+) serves as cofactor.

It catalyses the reaction [HPr protein]-L-serine + ATP = [HPr protein]-O-phospho-L-serine + ADP + H(+). It carries out the reaction [HPr protein]-O-phospho-L-serine + phosphate + H(+) = [HPr protein]-L-serine + diphosphate. Its function is as follows. Catalyzes the ATP- as well as the pyrophosphate-dependent phosphorylation of a specific serine residue in HPr, a phosphocarrier protein of the phosphoenolpyruvate-dependent sugar phosphotransferase system (PTS). HprK/P also catalyzes the pyrophosphate-producing, inorganic phosphate-dependent dephosphorylation (phosphorolysis) of seryl-phosphorylated HPr (P-Ser-HPr). The two antagonistic activities of HprK/P are regulated by several intracellular metabolites, which change their concentration in response to the absence or presence of rapidly metabolisable carbon sources (glucose, fructose, etc.) in the growth medium. Therefore, by controlling the phosphorylation state of HPr, HPrK/P is a sensor enzyme that plays a major role in the regulation of carbon metabolism and sugar transport: it mediates carbon catabolite repression (CCR), and regulates PTS-catalyzed carbohydrate uptake and inducer exclusion. The sequence is that of HPr kinase/phosphorylase from Streptococcus equi subsp. equi (strain 4047).